A 749-amino-acid polypeptide reads, in one-letter code: MEAETGSSVETGKKANRGTRIALVVFVGGTLVLGTILFLVSQGLLSLQAKQEYCLKPECIEAAAAILSKVNLSVDPCDNFFRFACDGWISNNPIPEDMPSYGVYPWLRHNVDLKLKELLEKSISRRRDTEAIQKAKILYSSCMNEKAIEKADAKPLLHILRHSPFRWPVLESNIGPEGVWSERKFSLLQTLATFRGQYSNSVFIRLYVSPDDKASNEHILKLDQATLSLAVREDYLDNSTEAKSYRDALYKFMVDTAVLLGANSSRAEHDMKSVLRLEIKIAEIMIPHENRTSEAMYNKMNISELSAMIPQFDWLGYIKKVIDTRLYPHLKDISPSENVVVRVPQYFKDLFRILGSERKKTIANYLVWRMVYSRIPNLSRRFQYRWLEFSRVIQGTTTLLPQWDKCVNFIESALPYVVGKMFVDVYFQEDKKEMMEELVEGVRWAFIDMLEKENEWMDAGTKRKAKEKARAVLAKVGYPEFIMNDTHVNEDLKAIKFSEADYFGNVLQTRKYLAQSDFFWLRKAVPKTEWFTNPTTVNAFYSASTNQIRFPAGELQKPFFWGTEYPRSLSYGAIGVIVGHEFTHGFDNNGRKYDKNGNLDPWWSTESEEKFKEKTKCMINQYSNYYWKKAGLNVKGKRTLGENIADNGGLREAFRAYRKWINDRRQGLEEPLLPGITFTNNQLFFLSYAHVRCNSYRPEAAREQVQIGAHSPPQFRVNGAISNFEEFQKAFNCPPNSTMNRGMDSCRLW.

Residues 1–20 (MEAETGSSVETGKKANRGTR) are Cytoplasmic-facing. A helical; Signal-anchor for type II membrane protein membrane pass occupies residues 21-41 (IALVVFVGGTLVLGTILFLVS). Residues 42–641 (QGLLSLQAKQ…LNVKGKRTLG (600 aa)) are Extracellular-facing. Positions 53–749 (YCLKPECIEA…NRGMDSCRLW (697 aa)) constitute a Peptidase M13 domain. Cysteines 54 and 59 form a disulfide. 7 N-linked (GlcNAc...) asparagine glycosylation sites follow: N71, N238, N263, N290, N301, N377, and N484. Intrachain disulfides connect C77–C733, C85–C693, C142–C406, and C617–C746. H580 is a binding site for Zn(2+). The active site involves E581. Zn(2+) is bound by residues H584 and E642. D646 acts as the Proton donor in catalysis. An N-linked (GlcNAc...) asparagine glycan is attached at N736.

Belongs to the peptidase M13 family. Interacts with MEPE; the interaction is zinc-dependent (via ASARM motif). Zn(2+) serves as cofactor. Specifically expressed in ovary. Expressed at low levels in kidney.

It localises to the cell membrane. Its function is as follows. Peptidase that cleaves SIBLING (small integrin-binding ligand, N-linked glycoprotein)-derived ASARM peptides, thus regulating their biological activity. Cleaves ASARM peptides between Ser and Glu or Asp residues. Regulates osteogenic cell differentiation and bone mineralization through the cleavage of the MEPE-derived ASARM peptide. Promotes dentin mineralization and renal phosphate reabsorption by cleaving DMP1- and MEPE-derived ASARM peptides. Inhibits the cleavage of MEPE by CTSB/cathepsin B thus preventing MEPE degradation. The sequence is that of Phosphate-regulating neutral endopeptidase PHEX (PHEX) from Homo sapiens (Human).